The following is a 333-amino-acid chain: Homeobox protein SIX3 (333 aa).

A compositionally biased stretch (gly residues) spans 57–71 (GGAGGAGGGSGGGGS). Disordered regions lie at residues 57-76 (GGAG…APPE), 233-252 (NPSK…TQVG), and 259-333 (RQRD…ECDV). The interval 73–120 (APPEELSMFQLPTLNFSPEQVASVCETLEETGDIERLGRFLWSLPVAP) is interaction with TLE5. Residues 207–266 (GEQKTHCFKERTRSLLREWYLQDPYPNPSKKRELAQATGLTPTQVGNWFKNRRQRDRAAA) constitute a DNA-binding region (homeobox). Residues 233–235 (NPS) form a bind to RHO promoter region. The segment covering 294 to 310 (SAESPSTAASPTTSVSS) has biased composition (low complexity). A compositionally biased stretch (polar residues) spans 317–333 (TGTSILSVTSSDSECDV).

Belongs to the SIX/Sine oculis homeobox family. As to quaternary structure, interacts with EYA4; translocates EYA4 from the cytoplasm to the nucleus and promotes activation of their target genes. Interacts with MTA1 and HDAC2; represses its own transcription. Interacts with MTA1; facilitates the binding of SIX3 to the core DNA motif of SIX3 promoter. Interacts with EYA1; promotes EYA1 translocation to the nucleus. Interacts with TLE1 and TLE5 (via Q domain); can act in combination with either TLE1 and/or TLE5 leading to transcriptional repression or activation, respectively. Interacts (via homeobox) with NR4A3; differentially regulates the transcriptional activities NR4A3. Interacts with GMNN. Interacts with TLE4. In terms of tissue distribution, expressed in ependymal cells during the formation of the lateral wall.

It localises to the nucleus. In terms of biological role, transcriptional regulator which can act as both a transcriptional repressor and activator by binding a ATTA homeodomain core recognition sequence on these target genes. During forebrain development represses WNT1 expression allowing zona limitans intrathalamica formation and thereby ensuring proper anterio-posterior patterning of the diencephalon and formation of the rostral diencephalon. Acts as a direct upstream activator of SHH expression in the rostral diencephalon ventral midline and that in turn SHH maintains its expression. In addition, Six3 activity is required for the formation of the telencephalon. During postnatal stages of brain development is necessary for ependymal cell maturation by promoting the maturation of radial glia into ependymal cells through regulation of neuroblast proliferation and migration. Acts on the proliferation and differentiation of neural progenitor cells through activating transcription of CCND1 AND CCND2. During early lens formation plays a role in lens induction and specification by activating directly PAX6 in the presumptive lens ectoderm. In turn PAX6 activates SIX3 resulting in activation of PDGFRA and CCND1 promoting cell proliferation. Also is required for the neuroretina development by directly suppressing WNT8B expression in the anterior neural plate territory. Its action during retina development and lens morphogenesis is TLE5 and TLE4-dependent manner. Furthermore, during eye development regulates several genes expression. Before and during early lens development represses the CRYGF promoter by binding a SIX repressor element. Directly activates RHO transcription, or cooperates with CRX or NRL. Six3 also functions in the formation of the proximodistal axis of the optic cup, and promotes the formation of optic vesicles-like structures. During pituitary development, acts in parallel or alternatively with HESX1 to control cell proliferation through Wnt/beta-catenin pathway. Plays a role in eye development by suppressing WNT1 expression and in dorsal-ventral patterning by repressing BMP signaling pathway. The protein is Homeobox protein SIX3 (Six3) of Mus musculus (Mouse).